Reading from the N-terminus, the 126-residue chain is Ribosome-binding factor A (126 aa).

The protein belongs to the RbfA family. Monomer. Binds 30S ribosomal subunits, but not 50S ribosomal subunits or 70S ribosomes.

Its subcellular location is the cytoplasm. In terms of biological role, one of several proteins that assist in the late maturation steps of the functional core of the 30S ribosomal subunit. Associates with free 30S ribosomal subunits (but not with 30S subunits that are part of 70S ribosomes or polysomes). Required for efficient processing of 16S rRNA. May interact with the 5'-terminal helix region of 16S rRNA. This chain is Ribosome-binding factor A, found in Thermosynechococcus vestitus (strain NIES-2133 / IAM M-273 / BP-1).